We begin with the raw amino-acid sequence, 524 residues long: RNA-splicing ligase RtcB homolog 2 (524 aa).

Residues Asp-141, Cys-144, His-249, His-281, and His-372 each contribute to the Mn(2+) site. 248–252 (NHYLE) contributes to the GMP binding site. GMP-binding positions include 372–373 (HN), 421–424 (GGSM), Ser-428, 447–450 (HGAG), and Lys-523. Residue His-447 is the GMP-histidine intermediate of the active site.

The protein belongs to the RtcB family. Catalytic component of the tRNA-splicing ligase complex. Mn(2+) is required as a cofactor.

The catalysed reaction is a 3'-end 3'-phospho-ribonucleotide-RNA + a 5'-end dephospho-ribonucleoside-RNA + GTP = a ribonucleotidyl-ribonucleotide-RNA + GMP + diphosphate. It catalyses the reaction a 3'-end 2',3'-cyclophospho-ribonucleotide-RNA + a 5'-end dephospho-ribonucleoside-RNA + GTP + H2O = a ribonucleotidyl-ribonucleotide-RNA + GMP + diphosphate + H(+). Its function is as follows. Catalytic subunit of the tRNA-splicing ligase complex that acts by directly joining spliced tRNA halves to mature-sized tRNAs by incorporating the precursor-derived splice junction phosphate into the mature tRNA as a canonical 3',5'-phosphodiester. May act as an RNA ligase with broad substrate specificity, and may function toward other RNAs. This is RNA-splicing ligase RtcB homolog 2 from Entamoeba dispar (strain ATCC PRA-260 / SAW760).